The sequence spans 81 residues: UPF0180 protein ABC2430 (81 aa).

It belongs to the UPF0180 family.

The chain is UPF0180 protein ABC2430 from Shouchella clausii (strain KSM-K16) (Alkalihalobacillus clausii).